A 425-amino-acid chain; its full sequence is Dihydroorotase (425 aa).

The Zn(2+) site is built by histidine 56 and histidine 58. Residues histidine 58–arginine 60 and asparagine 90 contribute to the substrate site. 3 residues coordinate Zn(2+): aspartate 148, histidine 175, and histidine 228. Asparagine 274 is a substrate binding site. Aspartate 301 contributes to the Zn(2+) binding site. Aspartate 301 is a catalytic residue. Substrate contacts are provided by residues histidine 305 and phenylalanine 319–glycine 320.

This sequence belongs to the metallo-dependent hydrolases superfamily. DHOase family. Class I DHOase subfamily. Zn(2+) is required as a cofactor.

The enzyme catalyses (S)-dihydroorotate + H2O = N-carbamoyl-L-aspartate + H(+). It participates in pyrimidine metabolism; UMP biosynthesis via de novo pathway; (S)-dihydroorotate from bicarbonate: step 3/3. Its function is as follows. Catalyzes the reversible cyclization of carbamoyl aspartate to dihydroorotate. The protein is Dihydroorotase of Lactobacillus helveticus (strain DPC 4571).